The following is a 1034-amino-acid chain: Protein argonaute 2 (1034 aa).

The interval 1 to 201 is disordered; it reads MEHERGGGGR…PMRRPDGGGS (201 aa). The span at 18–125 shows a compositional bias: gly residues; the sequence is GGRGGGGGDG…ESGGGGGRGG (108 aa). Over residues 172 to 187 the composition is skewed to low complexity; sequence VVRVQPPAPPVAVSRS. One can recognise a PAZ domain in the interval 391–504; it reads PVLDLVQKSV…VPIELCDLLE (114 aa). The 302-residue stretch at 688-989 folds into the Piwi domain; sequence LLFCPMSDQH…AAYRGRLYYE (302 aa).

The protein belongs to the argonaute family. Ago subfamily.

Its function is as follows. Probably involved in the RNA silencing pathway. May bind to short RNAs such as microRNAs (miRNAs) or short interfering RNAs (siRNAs), and represses the translation of mRNAs which are complementary to them. The sequence is that of Protein argonaute 2 (AGO2) from Oryza sativa subsp. japonica (Rice).